The sequence spans 116 residues: Large ribosomal subunit protein bL19 (116 aa).

This sequence belongs to the bacterial ribosomal protein bL19 family.

This protein is located at the 30S-50S ribosomal subunit interface and may play a role in the structure and function of the aminoacyl-tRNA binding site. This Fusobacterium nucleatum subsp. nucleatum (strain ATCC 25586 / DSM 15643 / BCRC 10681 / CIP 101130 / JCM 8532 / KCTC 2640 / LMG 13131 / VPI 4355) protein is Large ribosomal subunit protein bL19.